The primary structure comprises 496 residues: Protein disulfide-isomerase (496 aa).

The first 18 residues, 1 to 18, serve as a signal peptide directing secretion; that stretch reads MKFLICALFLAASYVAAS. Thioredoxin domains follow at residues 19–134 and 349–474; these read AEAE…KKTG and GKLK…ANGE. Catalysis depends on nucleophile residues C56, C59, C397, and C400. 2 disulfide bridges follow: C56–C59 and C397–C400. The interval 473-496 is disordered; it reads GEVADSEPVEETEEEEEAPKKDEL. The segment covering 476-489 has biased composition (acidic residues); sequence ADSEPVEETEEEEE. Positions 493–496 match the Prevents secretion from ER motif; that stretch reads KDEL.

The protein belongs to the protein disulfide isomerase family. As to quaternary structure, homodimer. In terms of tissue distribution, expressed in all head and body tissues.

The protein resides in the endoplasmic reticulum lumen. The catalysed reaction is Catalyzes the rearrangement of -S-S- bonds in proteins.. In terms of biological role, participates in the folding of proteins containing disulfide bonds. This Drosophila melanogaster (Fruit fly) protein is Protein disulfide-isomerase (Pdi).